Reading from the N-terminus, the 224-residue chain is C-&gt;U-editing enzyme APOBEC-2 (224 aa).

Residues 1-23 (MAQKEEAAEAAAPASQNGDDLEN) form a disordered region. Residues Glu-60 and His-98 each contribute to the Zn(2+) site. Residues 64-169 (GRNKTFLCYV…PEVQAALKKL (106 aa)) enclose the CMP/dCMP-type deaminase domain. Glu-100 (proton donor) is an active-site residue. Residues Cys-128 and Cys-131 each contribute to the Zn(2+) site.

It belongs to the cytidine and deoxycytidylate deaminase family. Homotetramer. It depends on Zn(2+) as a cofactor. In terms of tissue distribution, expressed exclusively in heart and skeletal muscle.

The enzyme catalyses cytidine(6666) in apoB mRNA + H2O + H(+) = uridine(6666) in apoB mRNA + NH4(+). Its function is as follows. Probable C to U editing enzyme whose physiological substrate is not yet known. Does not display detectable apoB mRNA editing. Has a low intrinsic cytidine deaminase activity. May play a role in the epigenetic regulation of gene expression through the process of active DNA demethylation. This is C-&gt;U-editing enzyme APOBEC-2 (Apobec2) from Mus musculus (Mouse).